A 1305-amino-acid chain; its full sequence is Contactin-associated protein-like 5 (1305 aa).

Residues 1 to 24 (MDSVPRLTGVFTLLLSGLWHLGSS) form the signal peptide. Over 25–1236 (ATNYNCDDPL…PLTNAVRSDS (1212 aa)) the chain is Extracellular. An F5/8 type C domain is found at 30–174 (CDDPLASLLS…IGMRVEVYGC (145 aa)). Cysteine 30 and cysteine 174 are disulfide-bonded. Laminin G-like domains lie at 180-360 (VADF…TFSC) and 367-544 (PITF…IDLC). N-linked (GlcNAc...) asparagine glycosylation is found at asparagine 282, asparagine 355, and asparagine 496. An intrachain disulfide couples cysteine 329 to cysteine 360. Intrachain disulfides connect cysteine 512–cysteine 544, cysteine 550–cysteine 561, cysteine 555–cysteine 570, and cysteine 572–cysteine 582. One can recognise an EGF-like 1 domain in the interval 546-583 (IKDRCLPNYCEHGGFCSQSWTTFYCNCSNTGYTGATCH). Residues 584–790 (NSLYEQSCEV…LRCYGDRHFW (207 aa)) enclose the Fibrinogen C-terminal domain. N-linked (GlcNAc...) asparagine glycosylation is present at asparagine 622. Residues 791–956 (NAVSFYTEAS…KVTSGVRPGC (166 aa)) enclose the Laminin G-like 3 domain. Disulfide bonds link cysteine 929–cysteine 956, cysteine 960–cysteine 973, cysteine 967–cysteine 982, cysteine 984–cysteine 994, and cysteine 1163–cysteine 1198. Residues 957 to 995 (PGHCSTYGSICHNGGKCVEKYSGYFCDCTNSPYEGPFCK) form the EGF-like 2 domain. A Laminin G-like 4 domain is found at 1000–1198 (AVFEAGTSVT…VQGTLMESSC (199 aa)). A helical transmembrane segment spans residues 1237–1257 (AVIGGVIAVVIFIIFSIIGIM). Residues 1258 to 1305 (TRFLYQHKQSHRTNQMKEKEYPENLDSSFRNDIDLQNTVSECKREYFI) lie on the Cytoplasmic side of the membrane.

This sequence belongs to the neurexin family.

It localises to the membrane. In terms of biological role, may play a role in the correct development and proper functioning of the peripheral and central nervous system and be involved in cell adhesion and intercellular communication. In Canis lupus familiaris (Dog), this protein is Contactin-associated protein-like 5 (CNTNAP5).